The primary structure comprises 563 residues: Germacrene-A synthase (563 aa).

Mg(2+)-binding residues include D316, D320, D461, and E469. The short motif at 316 to 320 (DDIYD) is the DDXXD motif element.

The protein belongs to the terpene synthase family. Tpsa subfamily. The cofactor is Mg(2+). Expressed in young leaves. Detected in trichomes and cones.

The catalysed reaction is (2E,6E)-farnesyl diphosphate = (+)-(R)-germacrene A + diphosphate. It functions in the pathway secondary metabolite biosynthesis; terpenoid biosynthesis. Its function is as follows. Sesquiterpene synthase that catalyzes the formation of germacrene A. Can use farnesyl diphosphate as substrate, but not geranyl diphosphate or geranylgeranyl diphosphate. Beta-elemene, the initially measured product in the assay, is derived nonenzymatically from germacrene A. The sequence is that of Germacrene-A synthase from Humulus lupulus (European hop).